We begin with the raw amino-acid sequence, 356 residues long: Carbohydrate sulfotransferase 10 (356 aa).

Residues 1-6 (MHHQWL) lie on the Cytoplasmic side of the membrane. The chain crosses the membrane as a helical; Signal-anchor for type II membrane protein span at residues 7–27 (LLAACFWVIFMFMVASKFITL). Topologically, residues 28-356 (TFKDPDGYSA…GYQKPDFLLN (329 aa)) are lumenal. A glycan (N-linked (GlcNAc...) asparagine) is linked at Asn99. Residues 127 to 133 (PKVGNTQ) and 189 to 197 (RDPFERLIS) each bind 3'-phosphoadenylyl sulfate. 2 N-linked (GlcNAc...) asparagine glycosylation sites follow: Asn228 and Asn316.

This sequence belongs to the sulfotransferase 2 family.

It localises to the golgi apparatus membrane. The catalysed reaction is 3-O-{beta-D-GlcA-(1-&gt;[3)-alpha-D-Xyl-(1-&gt;3)-beta-D-GlcA-(1-&gt;](n)-4)-beta-D-Xyl-(1-&gt;4)-Rib-ol-P-Rib-ol-P-3-beta-D-GalNAc-(1-&gt;3)-beta-D-GlcNAc-(1-&gt;4)-O-6-P-alpha-D-Man}-L-Thr-[protein] + 3'-phosphoadenylyl sulfate = 3-O-{O-3-S-beta-D-GlcA-(1-&gt;[3)-alpha-D-Xyl-(1-&gt;3)-beta-D-GlcA-(1-&gt;](n)-4)-beta-D-Xyl-(1-&gt;4)-Rib-ol-P-Rib-ol-P-3-beta-D-GalNAc-(1-&gt;3)-beta-D-GlcNAc-(1-&gt;4)-O-6-P-alpha-D-Man}-L-Thr-[protein] + adenosine 3',5'-bisphosphate + H(+). It catalyses the reaction 17beta-estradiol 3-O-(beta-D-glucuronate) + 3'-phosphoadenylyl sulfate = 17beta-estradiol 3-O-(3-sulfo-beta-D-glucuronate) + adenosine 3',5'-bisphosphate + H(+). The enzyme catalyses 17beta-estradiol 3-O-(beta-D-glucuronate) 17-sulfate + 3'-phosphoadenylyl sulfate = 17beta-estradiol 3-O-(3-sulfo-beta-D-glucuronate) 17-sulfate + adenosine 3',5'-bisphosphate + H(+). It carries out the reaction 17beta-estradiol 17-O-(beta-D-glucuronate) + 3'-phosphoadenylyl sulfate = 17beta-estradiol 17-O-(3-sulfo-beta-D-glucuronate) + adenosine 3',5'-bisphosphate + H(+). The catalysed reaction is 16alpha,17beta-estriol 3-O-(beta-D-glucuronate) + 3'-phosphoadenylyl sulfate = 16alpha,17beta-estriol 3-O-(3-sulfo-beta-D-glucuronate) + adenosine 3',5'-bisphosphate + H(+). It catalyses the reaction 16alpha,17beta-estriol 16-O-(beta-D-glucuronate) + 3'-phosphoadenylyl sulfate = 16alpha,17beta-estriol 16-O-(3-sulfo-beta-D-glucuronate) + adenosine 3',5'-bisphosphate + H(+). The enzyme catalyses 16alpha,17beta-estriol 17-O-(beta-D-glucuronate) + 3'-phosphoadenylyl sulfate = 16alpha,17beta-estriol 17-O-(3-sulfo-beta-D-glucuronate) + adenosine 3',5'-bisphosphate + H(+). It carries out the reaction estrone 3-O-(beta-D-glucuronate) + 3'-phosphoadenylyl sulfate = estrone 3-O-(3-sulfo-beta-D-glucuronate) + adenosine 3',5'-bisphosphate + H(+). The catalysed reaction is 3alpha,20alpha-dihydroxy-5beta-pregnane 3-O-(beta-D-glucuronate) + 3'-phosphoadenylyl sulfate = 3alpha,20alpha-dihydroxy-5beta-pregnane 3-O-(3-sulfo-beta-D-glucuronate) + adenosine 3',5'-bisphosphate + H(+). It catalyses the reaction testosterone 17-O-(beta-D-glucuronate) + 3'-phosphoadenylyl sulfate = testosterone 17-O-(3-sulfo-beta-D-glucuronate) + adenosine 3',5'-bisphosphate + H(+). The enzyme catalyses 3beta-androst-5-en-17-one 3-O-(beta-D-glucuronate) + 3'-phosphoadenylyl sulfate = 3beta-androst-5-en-17-one 3-O-(3-sulfo-beta-D-glucuronate) + adenosine 3',5'-bisphosphate + H(+). It carries out the reaction 3alpha,17alpha-dihydroxy-5beta-androstane-11-one-17beta-carboxylate 3-O-(beta-D-glucuronate) + 3'-phosphoadenylyl sulfate = 3alpha,17alpha-dihydroxy-5beta-androstane-11-one-17beta-carboxylate 3-O-(3-sulfo-beta-D-glucuronate) + adenosine 3',5'-bisphosphate + H(+). The catalysed reaction is 3alpha-hydroxyetiocholan-17-one 3-O-(beta-D-glucuronate) + 3'-phosphoadenylyl sulfate = 3alpha-hydroxyetiocholan-17-one 3-O-(3-sulfo-beta-D-glucuronate) + adenosine 3',5'-bisphosphate + H(+). It functions in the pathway steroid metabolism. Its pathway is protein modification; carbohydrate sulfation. Its function is as follows. Catalyzes the transfer of sulfate from 3'-phosphoadenylyl sulfate (PAPS) to position 3 of terminal glucuronic acid of both protein- and lipid-linked oligosaccharides. Participates in biosynthesis of HNK-1 carbohydrate structure 3-O-sulfo-beta-D-GlcA-(1-&gt;3)-beta-D-Gal-(1-&gt;4)-D-GlcNAc-R, a sulfated glucuronyl-lactosaminyl residue carried by many neural recognition molecules, which is involved in cell interactions during ontogenetic development and in synaptic plasticity in the adult. May be indirectly involved in synapse plasticity of the hippocampus, via its role in HNK-1 biosynthesis. Sulfates terminal glucuronyl residue of the laminin globular (LG)-domain binding epitope on DAG1/alpha-dystroglycan and prevents further polymerization by LARGE1 glycosyltransferase. Likely defines the chain length of LG epitope, conferring binding specificity to extracellular matrix components. Plays a role in down-regulating the steroid hormones. Sulfates glucuronidated estrogens and androgens with an impact in hormone cycle and fertility. Has a preference for glucuronyl moiety at the 3-hydroxyl group of a sterol ring rather than the 17-hydroxyl group, showing high catalytic efficiency for 17beta-estradiol 3-O-(beta-D-glucuronate) and dehydroepiandrosterone 3-O-(beta-D-glucuronate) hormones. This is Carbohydrate sulfotransferase 10 from Mus musculus (Mouse).